Reading from the N-terminus, the 488-residue chain is UDP-glycosyltransferase 73B1 (488 aa).

Residues T297, 356 to 358 (APQ), 373 to 381 (HCGWNSLLE), and 395 to 398 (GAEQ) each bind UDP-alpha-D-glucose.

The protein belongs to the UDP-glycosyltransferase family.

Functionally, possesses low quercetin 3-O-glucosyltransferase and 7-O-glucosyltransferase activities in vitro. The chain is UDP-glycosyltransferase 73B1 (UGT73B1) from Arabidopsis thaliana (Mouse-ear cress).